The primary structure comprises 323 residues: tRNA uridine(34) hydroxylase (323 aa).

The region spanning 127–221 is the Rhodanese domain; the sequence is QDENTVVLDA…YGQDPEVQGD (95 aa). Catalysis depends on Cys-181, which acts as the Cysteine persulfide intermediate.

Belongs to the TrhO family.

It carries out the reaction uridine(34) in tRNA + AH2 + O2 = 5-hydroxyuridine(34) in tRNA + A + H2O. In terms of biological role, catalyzes oxygen-dependent 5-hydroxyuridine (ho5U) modification at position 34 in tRNAs. The protein is tRNA uridine(34) hydroxylase of Oceanobacillus iheyensis (strain DSM 14371 / CIP 107618 / JCM 11309 / KCTC 3954 / HTE831).